We begin with the raw amino-acid sequence, 633 residues long: Chaperone protein DnaK (633 aa).

At T198 the chain carries Phosphothreonine; by autocatalysis.

The protein belongs to the heat shock protein 70 family.

Functionally, acts as a chaperone. This Rhodopseudomonas palustris (strain BisA53) protein is Chaperone protein DnaK.